A 441-amino-acid chain; its full sequence is tRNA pseudouridine synthase Pus10 (441 aa).

Asp-268 (nucleophile) is an active-site residue. Substrate contacts are provided by Tyr-333 and Tyr-405.

It belongs to the pseudouridine synthase Pus10 family.

The catalysed reaction is uridine(54) in tRNA = pseudouridine(54) in tRNA. It catalyses the reaction uridine(55) in tRNA = pseudouridine(55) in tRNA. Responsible for synthesis of pseudouridine from uracil-54 and uracil-55 in the psi GC loop of transfer RNAs. The polypeptide is tRNA pseudouridine synthase Pus10 (Thermosphaera aggregans (strain DSM 11486 / M11TL)).